The following is a 598-amino-acid chain: Nuclear receptor subfamily 4 group A member 2 (598 aa).

The interval 1-22 is disordered; the sequence is MPCVQAQYGSSPQGASPASQSY. The segment covering 8–22 has biased composition (low complexity); it reads YGSSPQGASPASQSY. Positions 260-335 form a DNA-binding region, nuclear receptor; it reads EGLCAVCGDN…VGMVKEVVRT (76 aa). 2 NR C4-type zinc fingers span residues 263 to 283 and 299 to 323; these read CAVC…CEGC and CLAN…FQKC. Positions 287–314 match the Bipartite nuclear localization signal (NLS1) motif; sequence FKRTVQKNAKYVCLANKNCPVDKRRRNR. The segment at 337–361 is disordered; that stretch reads SLKGRRGRLPSKPKSPQEPSPPSPP. The Nuclear localization signal (NLS1) motif lies at 338-350; that stretch reads LKGRRGRLPSKPK. Residues 352 to 361 are compositionally biased toward pro residues; sequence PQEPSPPSPP. The NR LBD domain maps to 360–595; that stretch reads PPVSLISALV…AIIDKLFLDT (236 aa). The short motif at 443–452 is the nuclear export sequence (NES1) element; the sequence is FLELFVLRLA. The short motif at 568 to 577 is the nuclear export sequence (NES2) element; that stretch reads QGLQRIFYLK.

This sequence belongs to the nuclear hormone receptor family. NR4 subfamily. In terms of assembly, interacts with SFPQ, NCOR2, SIN3A and HADC1. The interaction with NCOR2 increases in the absence of PITX3. Interacts with PER2. As to expression, expressed in a number of cell lines of T-cell, B-cell and fibroblast origin. Strong expression in brain tissue.

The protein resides in the cytoplasm. The protein localises to the nucleus. Transcriptional regulator which is important for the differentiation and maintenance of meso-diencephalic dopaminergic (mdDA) neurons during development. It is crucial for expression of a set of genes such as SLC6A3, SLC18A2, TH and DRD2 which are essential for development of mdDA neurons. The sequence is that of Nuclear receptor subfamily 4 group A member 2 (NR4A2) from Homo sapiens (Human).